The sequence spans 120 residues: Large ribosomal subunit protein uL18 (120 aa).

Residues 1-22 (MKLTRRESKNRRHRRVRGKVVG) form a disordered region. Residues 8–18 (SKNRRHRRVRG) show a composition bias toward basic residues.

Belongs to the universal ribosomal protein uL18 family. Part of the 50S ribosomal subunit; part of the 5S rRNA/L5/L18/L25 subcomplex. Contacts the 5S and 23S rRNAs.

In terms of biological role, this is one of the proteins that bind and probably mediate the attachment of the 5S RNA into the large ribosomal subunit, where it forms part of the central protuberance. This is Large ribosomal subunit protein uL18 from Nostoc punctiforme (strain ATCC 29133 / PCC 73102).